The following is a 150-amino-acid chain: Urease accessory protein UreE (150 aa).

The protein belongs to the UreE family.

Its subcellular location is the cytoplasm. Functionally, involved in urease metallocenter assembly. Binds nickel. Probably functions as a nickel donor during metallocenter assembly. The protein is Urease accessory protein UreE of Streptococcus salivarius (strain 57.I).